Reading from the N-terminus, the 65-residue chain is uncharacterized protein (65 aa).

Residues 24-65 are disordered; sequence NNNNNNNNNNNNNNNNNNNNNNNNNNNNNNNKNNKNNNKNND.

This is an uncharacterized protein from Dictyostelium discoideum (Social amoeba).